The chain runs to 540 residues: CTP synthase (540 aa).

The amidoligase domain stretch occupies residues methionine 1–leucine 267. CTP is bound at residue serine 15. Serine 15 provides a ligand contact to UTP. Position 16–21 (serine 16–isoleucine 21) interacts with ATP. Tyrosine 56 lines the L-glutamine pocket. ATP is bound at residue aspartate 73. 2 residues coordinate Mg(2+): aspartate 73 and glutamate 141. Residues aspartate 148 to glutamate 150, lysine 188 to glutamine 193, and lysine 224 contribute to the CTP site. UTP-binding positions include lysine 188 to glutamine 193 and lysine 224. Residue arginine 240–alanine 242 coordinates ATP. In terms of domain architecture, Glutamine amidotransferase type-1 spans threonine 292–lysine 540. Glycine 360 contributes to the L-glutamine binding site. Cysteine 387 (nucleophile; for glutamine hydrolysis) is an active-site residue. Residues methionine 388 to glutamine 391, glutamate 411, and arginine 468 each bind L-glutamine. Active-site residues include histidine 513 and glutamate 515.

This sequence belongs to the CTP synthase family. In terms of assembly, homotetramer.

It carries out the reaction UTP + L-glutamine + ATP + H2O = CTP + L-glutamate + ADP + phosphate + 2 H(+). The enzyme catalyses L-glutamine + H2O = L-glutamate + NH4(+). It catalyses the reaction UTP + NH4(+) + ATP = CTP + ADP + phosphate + 2 H(+). It functions in the pathway pyrimidine metabolism; CTP biosynthesis via de novo pathway; CTP from UDP: step 2/2. Its activity is regulated as follows. Allosterically activated by GTP, when glutamine is the substrate; GTP has no effect on the reaction when ammonia is the substrate. The allosteric effector GTP functions by stabilizing the protein conformation that binds the tetrahedral intermediate(s) formed during glutamine hydrolysis. Inhibited by the product CTP, via allosteric rather than competitive inhibition. Functionally, catalyzes the ATP-dependent amination of UTP to CTP with either L-glutamine or ammonia as the source of nitrogen. Regulates intracellular CTP levels through interactions with the four ribonucleotide triphosphates. The sequence is that of CTP synthase from Methanocaldococcus jannaschii (strain ATCC 43067 / DSM 2661 / JAL-1 / JCM 10045 / NBRC 100440) (Methanococcus jannaschii).